Here is a 249-residue protein sequence, read N- to C-terminus: Eukaryotic translation initiation factor 3 subunit J-A (249 aa).

Acidic residues predominate over residues 1-15 (MADADSWDADSFEPE). The interval 1-104 (MADADSWDAD…DTPLTPEDEL (104 aa)) is disordered. A compositionally biased stretch (basic and acidic residues) spans 16–27 (EPIKKAAVHDKW). The span at 28-52 (EGEDEDDDVKDNWDDDEEEEKEEEE) shows a compositional bias: acidic residues. Positions 34–96 (DDVKDNWDDD…QQLEETKRDT (63 aa)) form a coiled coil. Over residues 53–96 (EKKTEAKPTEKKKLSEKIKEKENLQRKKQEELRKQQLEETKRDT) the composition is skewed to basic and acidic residues.

This sequence belongs to the eIF-3 subunit J family. Component of the eukaryotic translation initiation factor 3 (eIF-3) complex, which is composed of 13 subunits: eif3a, eif3b, eif3c, eif3d, eif3e, eif3f, eif3g, eif3h, eif3i, eif3j, eif3k, eif3l and eif3m.

The protein localises to the cytoplasm. In terms of biological role, component of the eukaryotic translation initiation factor 3 (eIF-3) complex, which is involved in protein synthesis of a specialized repertoire of mRNAs and, together with other initiation factors, stimulates binding of mRNA and methionyl-tRNAi to the 40S ribosome. The eIF-3 complex specifically targets and initiates translation of a subset of mRNAs involved in cell proliferation. This is Eukaryotic translation initiation factor 3 subunit J-A (eif3ja) from Danio rerio (Zebrafish).